The sequence spans 426 residues: Coiled-coil domain-containing protein 86 (426 aa).

Residues 1 to 426 form a disordered region; sequence MDTPLRRSRR…QPPQRPVAKV (426 aa). S18 is subject to Phosphoserine. The span at 33-49 shows a compositional bias: basic and acidic residues; the sequence is ALVDFKSNSEETGELKS. Residues 55–145 are compositionally biased toward pro residues; it reads LSLPSPGPQP…SLPSPGPQPE (91 aa). Position 59 is a phosphoserine (S59). At T66 the chain carries Phosphothreonine. Phosphoserine occurs at positions 67, 70, 161, 172, 183, 191, 194, 225, 252, 253, and 283. A compositionally biased stretch (polar residues) spans 241–255; it reads QPAQELTVQAPSSPE. Basic residues predominate over residues 304–320; it reads GKPKSGRVWKDRSKKRF. Over residues 339-383 the composition is skewed to basic and acidic residues; sequence ERQERKLAKDFARHLEEEKQRRRQEKKERRAENLRRRLENERKAE. Residues 346 to 389 are a coiled coil; it reads AKDFARHLEEEKQRRRQEKKERRAENLRRRLENERKAEIVQVIR. Residues 392 to 402 show a composition bias toward basic residues; it reads AKLKKAKKKQL. Citrulline is present on R408.

Citrullinated by PADI4. In terms of tissue distribution, highly expressed in testis. Also expressed in heart, liver, kidney.

The protein localises to the nucleus. It is found in the chromosome. It localises to the nucleolus. Required for proper chromosome segregation during mitosis and error-free mitotic progression. The sequence is that of Coiled-coil domain-containing protein 86 from Mus musculus (Mouse).